A 215-amino-acid chain; its full sequence is Cytochrome b6 (215 aa).

The chain crosses the membrane as a helical span at residues 32–52 (IFYCLGGIVFVSFLIQVATGF). Cysteine 35 lines the heme c pocket. Heme b-binding residues include histidine 86 and histidine 100. 3 consecutive transmembrane segments (helical) span residues 90-110 (ASMM…TGGF), 116-136 (LTWV…VTGY), and 186-206 (LHTF…FLMI). Heme b contacts are provided by histidine 187 and histidine 202.

This sequence belongs to the cytochrome b family. PetB subfamily. The 4 large subunits of the cytochrome b6-f complex are cytochrome b6, subunit IV (17 kDa polypeptide, PetD), cytochrome f and the Rieske protein, while the 4 small subunits are PetG, PetL, PetM and PetN. The complex functions as a dimer. Heme b serves as cofactor. Requires heme c as cofactor.

Its subcellular location is the plastid. The protein resides in the chloroplast thylakoid membrane. Functionally, component of the cytochrome b6-f complex, which mediates electron transfer between photosystem II (PSII) and photosystem I (PSI), cyclic electron flow around PSI, and state transitions. The sequence is that of Cytochrome b6 from Porphyra purpurea (Red seaweed).